Reading from the N-terminus, the 1309-residue chain is Tetratricopeptide repeat protein 41 (1309 aa).

6 TPR repeats span residues 399 to 432 (PQLEMDFLNEDSNVLVFSLLIEVFMAAISLKPCI), 651 to 684 (WIQEKPNGLLYFQHQSLRNAVEHKMLGVTISVRE), 817 to 851 (LTFLLFLWGFLTLLGNRRANNLFSGAAPFLVSVQS), 859 to 892 (LKAQNAIGELYLDIGMMQKGLTYFQKAWSNLLRF), 989 to 1024 (MSYFSSAVLMEFLFSRSQRKQAIEYYKQVIKIKEKA), and 1042 to 1079 (SDTLCKLAGQLLSGDFCHHATMEAVSYLYRSLDLRAAH).

Its subcellular location is the cytoplasm. This chain is Tetratricopeptide repeat protein 41, found in Rattus norvegicus (Rat).